The sequence spans 30 residues: Cyclotide cter-P (30 aa).

The segment at residues 1-30 is a cross-link (cyclopeptide (Gly-Asn)); that stretch reads GIPCGESCVFIPCITAAIGCSCKSKVCYRN. 3 cysteine pairs are disulfide-bonded: cysteine 4–cysteine 20, cysteine 8–cysteine 22, and cysteine 13–cysteine 27.

This is a cyclic peptide.

The protein resides in the secreted. In terms of biological role, probably participates in a plant defense mechanism. The protein is Cyclotide cter-P of Clitoria ternatea (Butterfly pea).